Here is a 345-residue protein sequence, read N- to C-terminus: Viral Fc-gamma receptor-like protein UL119 (345 aa).

The first 23 residues, 1 to 23, serve as a signal peptide directing secretion; it reads MCSVLAIALVVALLGDMHPGVKS. The interval 23 to 42 is disordered; that stretch reads SSTTSAVTSPSNTTVTSTTS. Residues 24 to 294 lie on the Virion surface side of the membrane; the sequence is STTSAVTSPS…KSDPLFEDRL (271 aa). N-linked (GlcNAc...) asparagine; by host glycans are attached at residues N34, N48, N95, N104, N148, N179, N198, N217, N225, N241, N244, and N260. The region spanning 91–190 is the Ig-like V-type domain; it reads QVSLNATCKV…TWDLFTYPIY (100 aa). A helical transmembrane segment spans residues 295–317; that stretch reads LAYGVLAFLVFMVIILLYVTYML. At 318-345 the chain is on the intravirion side; sequence ARRRDWSYKRLEEPVEEKKHPVPYFKQW.

Its subcellular location is the virion membrane. Serves as a receptor for the Fc part of human IgG. May thus be involved in interfering with host Ig-mediated immune responses. This is Viral Fc-gamma receptor-like protein UL119 (UL119/UL118) from Human cytomegalovirus (strain AD169) (HHV-5).